The following is a 408-amino-acid chain: Glutamate N-acetyltransferase (408 aa).

Positions 150, 176, 189, 271, 403, and 408 each coordinate substrate. Threonine 189 serves as the catalytic Nucleophile.

This sequence belongs to the ArgJ family. As to quaternary structure, heterotetramer of two alpha and two beta chains.

It localises to the cytoplasm. The catalysed reaction is N(2)-acetyl-L-ornithine + L-glutamate = N-acetyl-L-glutamate + L-ornithine. It functions in the pathway amino-acid biosynthesis; L-arginine biosynthesis; L-ornithine and N-acetyl-L-glutamate from L-glutamate and N(2)-acetyl-L-ornithine (cyclic): step 1/1. Functionally, catalyzes the transfer of the acetyl group from N(2)-acetylornithine to glutamate, forming N-acetylglutamate and L-ornithine. The polypeptide is Glutamate N-acetyltransferase (Methanococcus maripaludis (strain C5 / ATCC BAA-1333)).